Consider the following 212-residue polypeptide: Imidazole glycerol phosphate synthase subunit HisH (212 aa).

In terms of domain architecture, Glutamine amidotransferase type-1 spans 1 to 210; sequence MIAVINYGAG…VRWSEAVQPK (210 aa). Cysteine 79 functions as the Nucleophile in the catalytic mechanism. Catalysis depends on residues histidine 185 and glutamate 187.

Heterodimer of HisH and HisF.

The protein resides in the cytoplasm. The enzyme catalyses 5-[(5-phospho-1-deoxy-D-ribulos-1-ylimino)methylamino]-1-(5-phospho-beta-D-ribosyl)imidazole-4-carboxamide + L-glutamine = D-erythro-1-(imidazol-4-yl)glycerol 3-phosphate + 5-amino-1-(5-phospho-beta-D-ribosyl)imidazole-4-carboxamide + L-glutamate + H(+). The catalysed reaction is L-glutamine + H2O = L-glutamate + NH4(+). Its pathway is amino-acid biosynthesis; L-histidine biosynthesis; L-histidine from 5-phospho-alpha-D-ribose 1-diphosphate: step 5/9. In terms of biological role, IGPS catalyzes the conversion of PRFAR and glutamine to IGP, AICAR and glutamate. The HisH subunit catalyzes the hydrolysis of glutamine to glutamate and ammonia as part of the synthesis of IGP and AICAR. The resulting ammonia molecule is channeled to the active site of HisF. The chain is Imidazole glycerol phosphate synthase subunit HisH from Chloroflexus aurantiacus (strain ATCC 29364 / DSM 637 / Y-400-fl).